Here is a 169-residue protein sequence, read N- to C-terminus: Cell cycle link protein (169 aa).

A binding to host SKP1 protein region spans residues 9-22 (LPEELRQKIVHDHL). The LXCXE motif, interaction with host RBR signature appears at 110-114 (LLCRE).

It belongs to the nanovirus Clink protein family. Interacts with host SKP1. Interacts (via LXCXE domain) with host retinoblastoma-related protein 1 (RBR1). Interacts (via LXCXE domain) with retinoblastoma-related proteins (RBR).

In terms of biological role, interacts with and disrupts the function of host retinoblastoma-related proteins RBR, which are key regulators of the cell cycle. Induces transcriptional activation of E2F-regulated S-phase and G2/M-phase-specific genes. Inactivation of the ability of RBR to arrest the cell cycle leads to the stimulation of viral DNA replication. This is Cell cycle link protein (DNA-C) from Cicer arietinum (Chickpea).